The sequence spans 98 residues: Large ribosomal subunit protein uL23 (98 aa).

Belongs to the universal ribosomal protein uL23 family. Part of the 50S ribosomal subunit. Contacts protein L29, and trigger factor when it is bound to the ribosome.

Its function is as follows. One of the early assembly proteins it binds 23S rRNA. One of the proteins that surrounds the polypeptide exit tunnel on the outside of the ribosome. Forms the main docking site for trigger factor binding to the ribosome. The protein is Large ribosomal subunit protein uL23 of Methylorubrum populi (strain ATCC BAA-705 / NCIMB 13946 / BJ001) (Methylobacterium populi).